The primary structure comprises 108 residues: Nitrite reductase (NADH) small subunit (108 aa).

As to quaternary structure, associates with NirB.

The protein resides in the cytoplasm. The catalysed reaction is NH4(+) + 3 NAD(+) + 2 H2O = nitrite + 3 NADH + 5 H(+). Its function is as follows. Required for activity of the reductase. This chain is Nitrite reductase (NADH) small subunit (nirD), found in Salmonella typhi.